A 253-amino-acid chain; its full sequence is Lys-63-specific deubiquitinase BRCC36 (253 aa).

The MPN domain occupies 9 to 145 (VELQTDVYMV…KEHEIFLNCF (137 aa)). Zn(2+) is bound by residues histidine 94, histidine 96, and aspartate 107. The short motif at 94–107 (HSHPHITVCPSHVD) is the JAMM motif element. Residues 227-249 (EKRIALNKLRATHLQRQLQELQK) adopt a coiled-coil conformation.

Belongs to the peptidase M67A family. BRCC36 subfamily. In terms of assembly, component of the BRISC complex, at least composed of ABRAXAS2, BRCC3/BRCC36, BABAM2 and BABAM1/NBA1. Within the complex, interacts directly with ABRAXAS2. The heterodimer with ABRAXAS2 assembles into a heterotetramer. The BRISC complex binds polyubiquitin. Requires Zn(2+) as cofactor.

The protein localises to the cytoplasm. It localises to the nucleus. Its subcellular location is the cytoskeleton. The protein resides in the spindle pole. Metalloprotease that specifically cleaves 'Lys-63'-linked polyubiquitin chains, leaving the last ubiquitin chain attached to its substrates. Catalytic subunit of the BRISC complex; does not have activity by itself, but needs to be associated into a heterotetramer with ABRAXAS2 for minimal in vitro activity. Plays a role in regulating the onset of apoptosis via its role in modulating 'Lys-63'-linked ubiquitination of target proteins. Required for normal mitotic spindle assembly and microtubule attachment to kinetochores via its role in deubiquitinating spindle assembly factors. This is Lys-63-specific deubiquitinase BRCC36 from Camponotus floridanus (Florida carpenter ant).